Consider the following 511-residue polypeptide: 2-methylbutanal oxime monooxygenase (511 aa).

The next 2 membrane-spanning stretches (helical) occupy residues 10-30 and 304-324; these read PPQW…LLLF and ILMN…TWAF. A heme-binding site is contributed by Cys451.

The protein belongs to the cytochrome P450 family. The cofactor is heme. As to expression, expressed in storage roots, primary roots, petioles and vascular tissues. Expressed in the outer cortex cells, the endodermis and around the xylem, phloem cells and laticifers.

The protein resides in the microsome membrane. The catalysed reaction is (1E,2S)-2-methylbutanal oxime + reduced [NADPH--hemoprotein reductase] + O2 = 2-hydroxy-2-methylbutanenitrile + oxidized [NADPH--hemoprotein reductase] + 2 H2O + H(+). The enzyme catalyses (E)-2-methylpropanal oxime + reduced [NADPH--hemoprotein reductase] + O2 = 2-hydroxy-2-methylpropanenitrile + oxidized [NADPH--hemoprotein reductase] + 2 H2O + H(+). Functionally, catalyzes the conversion of (E)-2-methylpropanal oxime (valox) to 2-hydroxy-2-methylpropanenitrile (acetone cyanohydrin) and of (E)-2-methylbutanal oxime (ilox) to 2-hydroxy-2-methylbutyronitrile. The reaction takes place in three steps. First, the oxime is isomerized to the (Z)- isomer, next the (Z)-isomer is dehydrated to the corresponding nitrile, followed by a C-hydroxylation of the nitrile. Can use both aliphatic and aromatic oximes as substrates. In Manihot esculenta (Cassava), this protein is 2-methylbutanal oxime monooxygenase (CYP71E7).